The sequence spans 340 residues: MKESINILAIESSCDETSAAVVINGREVLSNIIASQISTHEKFGGVVPEVASRKHIEVISAVVQEALDEANFTLDDIDAIGVTYGPGLVGALLVGLQYAKGLAFATGKPLIGVNHIEGHISANFIEYKDLKPPFMCLVVSGGHTFIVYMKDYGEFEVLGETRDDAAGEAFDKVARAIGLGYPGGPKIDKISKEGNEEAIKFPRANFHDDTLDFSFSGIKSAVLNYLNKKEMKGEEINRADVAASFQKSVVDVLVDNTIKACMSKKVDKIAVAGGVAANSCLRETLVRECKKKGIEVLIPPFILCTDNAAMIGSAAYFEYIKGRRTSLDINAVPNLKLGER.

Positions 115 and 119 each coordinate Fe cation. Substrate-binding positions include 138-142 (VVSGG), D171, G184, D188, and N278. Residue D306 participates in Fe cation binding.

The protein belongs to the KAE1 / TsaD family. It depends on Fe(2+) as a cofactor.

It is found in the cytoplasm. It catalyses the reaction L-threonylcarbamoyladenylate + adenosine(37) in tRNA = N(6)-L-threonylcarbamoyladenosine(37) in tRNA + AMP + H(+). Required for the formation of a threonylcarbamoyl group on adenosine at position 37 (t(6)A37) in tRNAs that read codons beginning with adenine. Is involved in the transfer of the threonylcarbamoyl moiety of threonylcarbamoyl-AMP (TC-AMP) to the N6 group of A37, together with TsaE and TsaB. TsaD likely plays a direct catalytic role in this reaction. This chain is tRNA N6-adenosine threonylcarbamoyltransferase, found in Clostridium botulinum (strain 657 / Type Ba4).